The following is a 151-amino-acid chain: Large ribosomal subunit protein uL15 (151 aa).

The disordered stretch occupies residues 1 to 57 (MTLRLDSLKSNKGARRRKLRKGRGIAAGQGASCGFGMRGQKSRSGRPTRPGFEGGQM). The span at 12–23 (KGARRRKLRKGR) shows a compositional bias: basic residues. The segment covering 25 to 37 (IAAGQGASCGFGM) has biased composition (gly residues).

This sequence belongs to the universal ribosomal protein uL15 family. Part of the 50S ribosomal subunit.

Binds to the 23S rRNA. In Synechococcus sp. (strain CC9605), this protein is Large ribosomal subunit protein uL15.